The sequence spans 206 residues: Ribonuclease HII (206 aa).

One can recognise an RNase H type-2 domain in the interval 27–206 (ARIAGVDEAG…CALHRRSFKH (180 aa)). 3 residues coordinate a divalent metal cation: D33, E34, and D125.

This sequence belongs to the RNase HII family. The cofactor is Mn(2+). Mg(2+) is required as a cofactor.

Its subcellular location is the cytoplasm. The catalysed reaction is Endonucleolytic cleavage to 5'-phosphomonoester.. Functionally, endonuclease that specifically degrades the RNA of RNA-DNA hybrids. This chain is Ribonuclease HII, found in Moorella thermoacetica (strain ATCC 39073 / JCM 9320).